We begin with the raw amino-acid sequence, 85 residues long: Antifungal protein (85 aa).

A signal peptide spans 1 to 18 (MVKLFVIVILALIAVAFG). 2 consecutive repeat copies span residues 19–25 (QHGHGGQ) and 67–73 (QHGHGGQ). Residues 19 to 73 (QHGHGGQDQHGYGHGQQAVYGKGHEGHGVNNLGQDGHGQHGYAHGHSDQHGHGGQ) form a 2 X 7 AA repeats of Q-H-G-H-G-G-Q region. The span at 22–32 (HGGQDQHGYGH) shows a compositional bias: gly residues. The interval 22–85 (HGGQDQHGYG…QHDGYKNRGY (64 aa)) is disordered. Positions 63-85 (GHSDQHGHGGQHGQHDGYKNRGY) are enriched in basic and acidic residues.

In terms of assembly, homodimer. In terms of processing, the N-terminus is blocked. In terms of tissue distribution, hemolymph.

Functionally, this protein inhibits the growth of a variety of fungal species. The antifungal activity of this protein is enhanced by the presence of sarcotoxin IA. This Sarcophaga peregrina (Flesh fly) protein is Antifungal protein.